A 166-amino-acid chain; its full sequence is Arginine repressor (166 aa).

This sequence belongs to the ArgR family.

The protein localises to the cytoplasm. Its pathway is amino-acid biosynthesis; L-arginine biosynthesis [regulation]. Functionally, regulates arginine biosynthesis genes. The polypeptide is Arginine repressor (Mycobacterium ulcerans (strain Agy99)).